The sequence spans 171 residues: Early E1A protein (171 aa).

The interval P40–V48 is interaction with RB1 in competition with E2F1. The segment at D67–T96 is disordered. Residues S84–T96 show a composition bias toward pro residues. The LXCXE motif, interaction with host RB1 signature appears at L106–E110. The segment at C145–C163 is a zinc-finger region. The short motif at K166–R171 is the Nuclear localization signal element.

The protein belongs to the adenoviridae E1A protein family. In terms of assembly, interacts with host UBE2I; this interaction interferes with polySUMOylation. Interacts with host RB1; this interaction induces the aberrant dissociation of RB1-E2F1 complex thereby disrupting the activity of RB1 and activating E2F1-regulated genes. Interacts with host ATF7; the interaction enhances ATF7-mediated viral transactivation activity which requires the zinc binding domains of both proteins. Isoform early E1A 32 kDa protein and isoform early E1A 26 kDa protein interact (via N-terminus) with CUL1 and E3 ubiquitin ligase RBX1; these interactions inhibit RBX1-CUL1-dependent elongation reaction of ubiquitin chains and attenuate ubiquitination of SCF(FBXW7) target proteins. Interacts (via PXLXP motif) with host ZMYND11/BS69 (via MYND-type zinc finger); this interaction inhibits E1A mediated transactivation. Interacts with host EP300; this interaction stimulates the acetylation of RB1 by recruiting EP300 and RB1 into a multimeric-protein complex. Interacts with host CTBP1 and CTBP2; this interaction seems to potentiate viral replication. Interacts with host DCAF7. Interacts with host DYRK1A. Interacts with host KPNA4; this interaction allows E1A import into the host nucleus. Interacts with host EP400; this interaction stabilizes MYC. Interacts with host TBP protein; this interaction probably disrupts the TBP-TATA complex.

It localises to the host nucleus. Its function is as follows. Plays a role in viral genome replication by driving entry of quiescent cells into the cell cycle. Stimulation of progression from G1 to S phase allows the virus to efficiently use the cellular DNA replicating machinery to achieve viral genome replication. E1A protein has both transforming and trans-activating activities. Induces the disassembly of the E2F1 transcription factor from RB1 by direct competition for the same binding site on RB1, with subsequent transcriptional activation of E2F1-regulated S-phase genes and of the E2 region of the adenoviral genome. Release of E2F1 leads to the ARF-mediated inhibition of MDM2 and causes TP53/p53 to accumulate because it is not targeted for degradation by MDM2-mediated ubiquitination anymore. This increase in TP53, in turn, would arrest the cell proliferation and direct its death but this effect is counteracted by the viral protein E1B-55K. Inactivation of the ability of RB1 to arrest the cell cycle is critical for cellular transformation, uncontrolled cellular growth and proliferation induced by viral infection. Interaction with RBX1 and CUL1 inhibits ubiquitination of the proteins targeted by SCF(FBXW7) ubiquitin ligase complex, and may be linked to unregulated host cell proliferation. The tumorigenesis-restraining activity of E1A may be related to the disruption of the host CtBP-CtIP complex through the CtBP binding motif. In Canis lupus familiaris (Dog), this protein is Early E1A protein.